Consider the following 244-residue polypeptide: Phosphoadenosine 5'-phosphosulfate reductase (244 aa).

The active-site Nucleophile; cysteine thiosulfonate intermediate is the cysteine 239.

Belongs to the PAPS reductase family. CysH subfamily.

The protein resides in the cytoplasm. It carries out the reaction [thioredoxin]-disulfide + sulfite + adenosine 3',5'-bisphosphate + 2 H(+) = [thioredoxin]-dithiol + 3'-phosphoadenylyl sulfate. It functions in the pathway sulfur metabolism; hydrogen sulfide biosynthesis; sulfite from sulfate: step 3/3. Its function is as follows. Catalyzes the formation of sulfite from phosphoadenosine 5'-phosphosulfate (PAPS) using thioredoxin as an electron donor. In Shigella flexneri serotype 5b (strain 8401), this protein is Phosphoadenosine 5'-phosphosulfate reductase.